Consider the following 1243-residue polypeptide: Interphotoreceptor matrix proteoglycan 2 (1243 aa).

Positions 1 to 27 (MIMFLPVGRMSLGILILFLTGGNLVSA) are cleaved as a signal peptide. At 28–1106 (SEERQEPMHA…EFVSEPFVIG (1079 aa)) the chain is on the extracellular side. A disordered region spans residues 205–234 (GLASESSAASPQESISNEIENVTEEPTQPA). The span at 207–220 (ASESSAASPQESIS) shows a compositional bias: low complexity. The segment covering 221 to 230 (NEIENVTEEP) has biased composition (polar residues). Asn225 carries an N-linked (GlcNAc...) asparagine glycan. The SEA 1 domain maps to 235–349 (AEQIAEFSIQ…KPTAVYTISN (115 aa)). Positions 255–263 (RDPSSALYR) are hyaluronan-binding motif involved in chondroitin sulfate A-binding. Residues Asn297, Asn316, and Asn366 are each glycosylated (N-linked (GlcNAc...) asparagine). 3 O-linked (GalNAc...) threonine glycosylation sites follow: Thr427, Thr428, and Thr429. A glycan (N-linked (GlcNAc...) asparagine) is linked at Asn582. Thr701, Thr704, and Thr712 each carry an O-linked (GalNAc...) threonine glycan. The segment covering 748–762 (EDMVHTESSSHKELD) has biased composition (basic and acidic residues). Residues 748–768 (EDMVHTESSSHKELDSEVPVS) form a disordered region. Residues Thr817 and Thr888 are each glycosylated (O-linked (GalNAc...) threonine). Positions 900 to 1013 (GALVVFFSLR…YSLDVESGDE (114 aa)) constitute an SEA 2 domain. Residues Asn945 and Asn959 are each glycosylated (N-linked (GlcNAc...) asparagine). EGF-like domains follow at residues 1013–1054 (EANP…LPCQ) and 1055–1096 (SLCD…QHCE). 6 cysteine pairs are disulfide-bonded: Cys1017/Cys1028, Cys1022/Cys1039, Cys1041/Cys1053, Cys1057/Cys1070, Cys1064/Cys1080, and Cys1082/Cys1095. The segment at 1083–1091 (RVGSNWWYR) is hyaluronan-binding motif involved in chondroitin sulfate C-binding. A helical membrane pass occupies residues 1107-1127 (ITIASVVSFLLVASAVVFFLV). Residues 1128–1136 (KMLQAQNVR) form a hyaluronan-binding motif involved in chondroitin sulfate A- and C-binding region. The Cytoplasmic portion of the chain corresponds to 1128–1243 (KMLQAQNVRR…FVREHQMEEL (116 aa)). The interval 1139–1147 (RQRPTSSSR) is hyaluronan-binding motif involved in chondroitin sulfate C-binding. A hyaluronan-binding motif involved in chondroitin sulfate A- and C-binding motif region spans residues 1212–1220 (KEEIQERMR).

As to expression, expressed in the retina (at protein level). Expressed in the pineal gland.

It localises to the photoreceptor outer segment membrane. It is found in the photoreceptor inner segment membrane. The protein localises to the secreted. Its subcellular location is the extracellular space. The protein resides in the extracellular matrix. It localises to the interphotoreceptor matrix. Functionally, chondroitin sulfate- and hyaluronan-binding proteoglycan involved in the organization of interphotoreceptor matrix; may participate in the maturation and maintenance of the light-sensitive photoreceptor outer segment. Binds heparin. This chain is Interphotoreceptor matrix proteoglycan 2 (Impg2), found in Mus musculus (Mouse).